A 448-amino-acid polypeptide reads, in one-letter code: Protein king tubby (448 aa).

Positions 103-195 (HELEDEESSP…NGTGGESEGD (93 aa)) are disordered. Residues 118–133 (QHQQSASHSANSTQSQ) are compositionally biased toward low complexity. Position 141 is a phosphoserine (S141). Positions 182-191 (NGTGNGTGGE) are enriched in gly residues.

It belongs to the TUB family.

It localises to the cytoplasm. The protein localises to the nucleus. The protein resides in the cell projection. It is found in the cilium membrane. Its subcellular location is the rhabdomere. This chain is Protein king tubby, found in Drosophila erecta (Fruit fly).